We begin with the raw amino-acid sequence, 389 residues long: Probable acyl-CoA dehydrogenase fadE25 (389 aa).

This sequence belongs to the acyl-CoA dehydrogenase family. FAD serves as cofactor.

The enzyme catalyses a 2,3-saturated acyl-CoA + A = a 2,3-dehydroacyl-CoA + AH2. In Mycobacterium leprae (strain TN), this protein is Probable acyl-CoA dehydrogenase fadE25 (fadE25).